Reading from the N-terminus, the 297-residue chain is Glycine--tRNA ligase alpha subunit (297 aa).

The protein belongs to the class-II aminoacyl-tRNA synthetase family. Tetramer of two alpha and two beta subunits.

It is found in the cytoplasm. It carries out the reaction tRNA(Gly) + glycine + ATP = glycyl-tRNA(Gly) + AMP + diphosphate. The polypeptide is Glycine--tRNA ligase alpha subunit (glyQ) (Halalkalibacterium halodurans (strain ATCC BAA-125 / DSM 18197 / FERM 7344 / JCM 9153 / C-125) (Bacillus halodurans)).